We begin with the raw amino-acid sequence, 317 residues long: Acetyl-coenzyme A carboxylase carboxyl transferase subunit beta (317 aa).

Residues methionine 1–alanine 28 form a disordered region. The CoA carboxyltransferase N-terminal domain occupies proline 55–glutamine 317. Zn(2+)-binding residues include cysteine 59, cysteine 62, cysteine 78, and cysteine 81. Residues cysteine 59 to cysteine 81 form a C4-type zinc finger.

This sequence belongs to the AccD/PCCB family. As to quaternary structure, acetyl-CoA carboxylase is a heterohexamer composed of biotin carboxyl carrier protein (AccB), biotin carboxylase (AccC) and two subunits each of ACCase subunit alpha (AccA) and ACCase subunit beta (AccD). Zn(2+) is required as a cofactor.

It localises to the cytoplasm. It catalyses the reaction N(6)-carboxybiotinyl-L-lysyl-[protein] + acetyl-CoA = N(6)-biotinyl-L-lysyl-[protein] + malonyl-CoA. It participates in lipid metabolism; malonyl-CoA biosynthesis; malonyl-CoA from acetyl-CoA: step 1/1. Its function is as follows. Component of the acetyl coenzyme A carboxylase (ACC) complex. Biotin carboxylase (BC) catalyzes the carboxylation of biotin on its carrier protein (BCCP) and then the CO(2) group is transferred by the transcarboxylase to acetyl-CoA to form malonyl-CoA. This is Acetyl-coenzyme A carboxylase carboxyl transferase subunit beta from Psychrobacter arcticus (strain DSM 17307 / VKM B-2377 / 273-4).